The following is a 183-amino-acid chain: MTTNGFDINDLKRRMDGAKESLRYELGGLRTGRAAISMLEPVQVEAYGSHMPLNQVATVSVPEPRLLSVQVWDKSMVKAVETAIVNSNLGLNPATEGQVIRLRIPELNEERRKELVKVAHKYAEAARVAVRHVRRDGLDIVKKDKMSEDEQERASGEIQKVTDAAIADIDKLLATKEKEILTV.

Belongs to the RRF family.

The protein resides in the cytoplasm. Responsible for the release of ribosomes from messenger RNA at the termination of protein biosynthesis. May increase the efficiency of translation by recycling ribosomes from one round of translation to another. The chain is Ribosome-recycling factor from Afipia carboxidovorans (strain ATCC 49405 / DSM 1227 / KCTC 32145 / OM5) (Oligotropha carboxidovorans).